Reading from the N-terminus, the 26-residue chain is uncharacterized protein (26 aa).

Residues 3 to 23 (IIYLILFLIVIYLLYRILDVL) traverse the membrane as a helical segment.

It localises to the membrane. This is an uncharacterized protein from Helicobacter pylori (strain J99 / ATCC 700824) (Campylobacter pylori J99).